We begin with the raw amino-acid sequence, 559 residues long: Potassium-transporting ATPase potassium-binding subunit (559 aa).

Helical transmembrane passes span 5–25, 27–47, 63–83, 132–152, 170–190, 253–273, 283–303, 327–347, 356–376, 379–399, 416–436, 484–504, and 524–544; these read GFLL…PLGS, LARL…RILW, LLAL…LLFW, GLTV…FALI, LVRI…LFFI, LAQM…FGEA, LLWA…WAEV, FGVL…CGAV, ALGG…FGGV, GLYG…LMIG, MTAL…ALAM, LLAF…MAIA, and GALF…LTFI.

It belongs to the KdpA family. The system is composed of three essential subunits: KdpA, KdpB and KdpC.

It localises to the cell inner membrane. Functionally, part of the high-affinity ATP-driven potassium transport (or Kdp) system, which catalyzes the hydrolysis of ATP coupled with the electrogenic transport of potassium into the cytoplasm. This subunit binds the periplasmic potassium ions and delivers the ions to the membrane domain of KdpB through an intramembrane tunnel. In Salmonella heidelberg (strain SL476), this protein is Potassium-transporting ATPase potassium-binding subunit.